The sequence spans 227 residues: MAYPFQLGFQDAASPIMEELLHFHDHTLMIVFLISSLVLYIITLMLTTKLTHTSTMDAQEVETVWTILPAIILILIALPSLRILYMMDEVNNPSLTVKTMGHQWYWSYEYTDYEDLSFDSYMIPTSDLKPGELRLLEVDNRVVLPMEMTIRMLVSSEDVLHSWAVPSLGLKTDAIPGRLNQTTLMSTRPGLFYGQCSEICGSNHSFMPIVLELVPLEVFEKWSVSML.

Over 1 to 14 (MAYPFQLGFQDAAS) the chain is Mitochondrial intermembrane. The helical transmembrane segment at 15 to 45 (PIMEELLHFHDHTLMIVFLISSLVLYIITLM) threads the bilayer. Residues 46–59 (LTTKLTHTSTMDAQ) are Mitochondrial matrix-facing. A helical membrane pass occupies residues 60-87 (EVETVWTILPAIILILIALPSLRILYMM). At 88 to 227 (DEVNNPSLTV…VFEKWSVSML (140 aa)) the chain is on the mitochondrial intermembrane side. His161, Cys196, Glu198, Cys200, His204, and Met207 together coordinate Cu cation. Residue Glu198 participates in Mg(2+) binding.

Belongs to the cytochrome c oxidase subunit 2 family. Component of the cytochrome c oxidase (complex IV, CIV), a multisubunit enzyme composed of 14 subunits. The complex is composed of a catalytic core of 3 subunits MT-CO1, MT-CO2 and MT-CO3, encoded in the mitochondrial DNA, and 11 supernumerary subunits COX4I, COX5A, COX5B, COX6A, COX6B, COX6C, COX7A, COX7B, COX7C, COX8 and NDUFA4, which are encoded in the nuclear genome. The complex exists as a monomer or a dimer and forms supercomplexes (SCs) in the inner mitochondrial membrane with NADH-ubiquinone oxidoreductase (complex I, CI) and ubiquinol-cytochrome c oxidoreductase (cytochrome b-c1 complex, complex III, CIII), resulting in different assemblies (supercomplex SCI(1)III(2)IV(1) and megacomplex MCI(2)III(2)IV(2)). Found in a complex with TMEM177, COA6, COX18, COX20, SCO1 and SCO2. Interacts with TMEM177 in a COX20-dependent manner. Interacts with COX20. Interacts with COX16. Cu cation is required as a cofactor.

The protein localises to the mitochondrion inner membrane. The enzyme catalyses 4 Fe(II)-[cytochrome c] + O2 + 8 H(+)(in) = 4 Fe(III)-[cytochrome c] + 2 H2O + 4 H(+)(out). Its function is as follows. Component of the cytochrome c oxidase, the last enzyme in the mitochondrial electron transport chain which drives oxidative phosphorylation. The respiratory chain contains 3 multisubunit complexes succinate dehydrogenase (complex II, CII), ubiquinol-cytochrome c oxidoreductase (cytochrome b-c1 complex, complex III, CIII) and cytochrome c oxidase (complex IV, CIV), that cooperate to transfer electrons derived from NADH and succinate to molecular oxygen, creating an electrochemical gradient over the inner membrane that drives transmembrane transport and the ATP synthase. Cytochrome c oxidase is the component of the respiratory chain that catalyzes the reduction of oxygen to water. Electrons originating from reduced cytochrome c in the intermembrane space (IMS) are transferred via the dinuclear copper A center (CU(A)) of subunit 2 and heme A of subunit 1 to the active site in subunit 1, a binuclear center (BNC) formed by heme A3 and copper B (CU(B)). The BNC reduces molecular oxygen to 2 water molecules using 4 electrons from cytochrome c in the IMS and 4 protons from the mitochondrial matrix. In Balaenoptera physalus (Fin whale), this protein is Cytochrome c oxidase subunit 2 (MT-CO2).